The sequence spans 462 residues: Zinc transporter zipt-7.2 (462 aa).

The helical transmembrane segment at 2–22 (LVKSCIFLSFLAIAAYGQAHL) threads the bilayer. Residues 39–134 (HHQGHGHAHG…HGHSHGAESA (96 aa)) are disordered. Residues 40 to 51 (HQGHGHAHGGHG) are compositionally biased toward basic residues. Residues 65-74 (AAAAEAATAA) show a composition bias toward low complexity. Residues 75-94 (AHDHGHAHDHDHGHAHDHGH) show a composition bias toward basic and acidic residues. The segment covering 111–120 (HGHAHDHHGH) has biased composition (basic residues). A compositionally biased stretch (basic and acidic residues) spans 121-132 (SHEDHGHSHGAE). The chain crosses the membrane as a helical span at residues 161 to 181 (AISATLLISAAPCFILMFIPI). The N-linked (GlcNAc...) asparagine glycan is linked to Asn184. Residues 194-214 (VLLAFGSGGLLGDAFLHLIPH) traverse the membrane as a helical segment. A disordered region spans residues 219-239 (GDGHGHSHSHGHSHGGGGHSH). Residues 244–264 (MSVGGWVLGGIIAFLTVEKLV) form a helical membrane-spanning segment. The disordered stretch occupies residues 270 to 307 (EDGHGHSHGHSHGGEKKETKEKDSKDKVAKKEEKPEKD). Residues 281 to 307 (HGGEKKETKEKDSKDKVAKKEEKPEKD) are compositionally biased toward basic and acidic residues. The N-linked (GlcNAc...) asparagine glycan is linked to Asn326. A run of 3 helical transmembrane segments spans residues 333–353 (IGAS…TVLV), 376–396 (AMLI…ISLF), and 410–430 (SWVL…SVIP). N-linked (GlcNAc...) asparagine glycosylation occurs at Asn435. Residues 441-461 (TVKEIFAILTGIFLMYLIAIY) form a helical membrane-spanning segment.

This sequence belongs to the ZIP transporter (TC 2.A.5) family. KE4/Catsup subfamily. Expressed in somatic tissues.

Its subcellular location is the membrane. Zinc transporter. This is Zinc transporter zipt-7.2 from Caenorhabditis elegans.